Consider the following 372-residue polypeptide: uncharacterized protein (372 aa).

The first 19 residues, 1–19 (MKIFFLFIILLGIIQLSNS), serve as a signal peptide directing secretion. Residue Asn18 is glycosylated (N-linked (GlcNAc...) asparagine). Positions 20–160 (SSCNIDIAGD…IWTTKYSCAI (141 aa)) constitute an MRH domain. Cys22 and Cys58 are joined by a disulfide. N-linked (GlcNAc...) asparagine glycosylation occurs at Asn59. Cysteines 128 and 158 form a disulfide. Residues 185 to 282 (NEILNEAQSN…VQFNDDIKLI (98 aa)) are a coiled coil. A disordered region spans residues 201–233 (KNEDLNNNNNNNNNNNNNNNNNNNNNNNNNKIN). Over residues 206-230 (NNNNNNNNNNNNNNNNNNNNNNNNN) the composition is skewed to low complexity.

It localises to the secreted. This is an uncharacterized protein from Dictyostelium discoideum (Social amoeba).